The following is a 1617-amino-acid chain: ATP-binding cassette sub-family A member 6 (1617 aa).

The chain crosses the membrane as a helical span at residues 31–51 (LLEWGLSILLGLCIALFSSSM). N-linked (GlcNAc...) asparagine glycosylation is found at Asn84 and Asn109. The next 6 membrane-spanning stretches (helical) occupy residues 222 to 242 (MFIL…SLNV), 268 to 288 (GLIY…IITF), 297 to 317 (FMVI…LVFL), 327 to 347 (LTNL…FTVF), 355 to 375 (LEWI…IQII), and 397 to 417 (IATF…ALYF). An ABC transporter 1 domain is found at 478–713 (IRIRNVKKEY…WGLGYHLSLH (236 aa)). 514 to 521 (GHSGAGKS) provides a ligand contact to ATP. Residues 854–874 (VLLTLLLVFGIAIFPLIVENI) traverse the membrane as a helical segment. Asn940 carries N-linked (GlcNAc...) asparagine glycosylation. The next 6 membrane-spanning stretches (helical) occupy residues 1007–1027 (IGLW…LCSI), 1062–1082 (ALVD…IFYI), 1094–1114 (IVFA…FFIY), 1127–1147 (SGLW…ITLI), 1150–1170 (FDLS…LLGF), and 1194–1214 (ATDF…VFVL). An ABC transporter 2 domain is found at 1288–1513 (GQKKSCFSKR…LGKDYILELK (226 aa)). 1320–1327 (GPNGAGKS) is a binding site for ATP.

It belongs to the ABC transporter superfamily. ABCA family. Widely expressed with higher expression in liver.

It is found in the golgi apparatus membrane. In terms of biological role, probable transporter which may play a role in macrophage lipid transport and homeostasis. This is ATP-binding cassette sub-family A member 6 (ABCA6) from Homo sapiens (Human).